We begin with the raw amino-acid sequence, 186 residues long: Translation initiation factor IF-3 (186 aa).

The segment at 1 to 21 (MINRSSGKDRDRSRSGDKELR) is disordered.

Belongs to the IF-3 family. In terms of assembly, monomer.

It is found in the cytoplasm. IF-3 binds to the 30S ribosomal subunit and shifts the equilibrium between 70S ribosomes and their 50S and 30S subunits in favor of the free subunits, thus enhancing the availability of 30S subunits on which protein synthesis initiation begins. The polypeptide is Translation initiation factor IF-3 (Borrelia turicatae (strain 91E135)).